Reading from the N-terminus, the 260-residue chain is Oxidoreductase macE (260 aa).

Belongs to the oxidoreductase OpS7 family.

It functions in the pathway secondary metabolite biosynthesis; terpenoid biosynthesis. Its function is as follows. Oxidoreductase; part of the gene cluster that mediates the biosynthesis of macrophorins, isoprenoid epoxycyclohexenones containing cyclized drimane moieties. The first step of the pathway is the synthesis of 6-methylsalicylic acid (6-MSA) by the polyketide synthase macA. 6-MSA is then converted to m-cresol by the decarboxylase macB. The cytochrome P450 monooxygenase macC then catalyzes the oxidation of m-cresol to toluquinol. Epoxidation of toluquinol is then performed by the short chain dehydrogenase macD, with the help of macE, and a further prenylation by macG leads to 7-deacetoxyyanuthone A. The next step is the hydroxylation of C-22 of 7-deacetoxyyanuthone A by the cytochrome P450 monooxygenase macH to yield 22-deacetylyanuthone A. O-Mevalon transferase macI then attaches mevalon to the hydroxyl group of 22-deacetylyanuthone A to produce yanuthone E. The terpene cyclase macJ catalyzes the cyclization of 22-deacetylyanuthone A to macrophorin A. MacJ is also able to catalyze cyclization of yanuthone E and 7-deacetoxyyanuthone A to their corresponding macrophorins. The macJ products can be further modified by macH and macJ, as well as by the FAD-dependent monooxygenase macF, to produce additional macrophorins, including 4'-oxomacrophorin A, 4'-oxomacrophorin D and 4'-oxomacrophorin E. This is Oxidoreductase macE from Penicillium terrestre.